We begin with the raw amino-acid sequence, 102 residues long: Large ribosomal subunit protein uL24 (102 aa).

This sequence belongs to the universal ribosomal protein uL24 family. In terms of assembly, part of the 50S ribosomal subunit.

Functionally, one of two assembly initiator proteins, it binds directly to the 5'-end of the 23S rRNA, where it nucleates assembly of the 50S subunit. One of the proteins that surrounds the polypeptide exit tunnel on the outside of the subunit. In Herpetosiphon aurantiacus (strain ATCC 23779 / DSM 785 / 114-95), this protein is Large ribosomal subunit protein uL24.